A 188-amino-acid polypeptide reads, in one-letter code: UPF0200 protein YG5714_1176 (188 aa).

Residue 15–22 coordinates ATP; that stretch reads GMPGSGKS.

Belongs to the UPF0200 family.

The chain is UPF0200 protein YG5714_1176 from Saccharolobus islandicus (strain Y.G.57.14 / Yellowstone #1) (Sulfolobus islandicus).